Here is a 176-residue protein sequence, read N- to C-terminus: ATP synthase subunit delta (176 aa).

Belongs to the ATPase delta chain family. F-type ATPases have 2 components, F(1) - the catalytic core - and F(0) - the membrane proton channel. F(1) has five subunits: alpha(3), beta(3), gamma(1), delta(1), epsilon(1). F(0) has three main subunits: a(1), b(2) and c(10-14). The alpha and beta chains form an alternating ring which encloses part of the gamma chain. F(1) is attached to F(0) by a central stalk formed by the gamma and epsilon chains, while a peripheral stalk is formed by the delta and b chains.

The protein resides in the cell inner membrane. F(1)F(0) ATP synthase produces ATP from ADP in the presence of a proton or sodium gradient. F-type ATPases consist of two structural domains, F(1) containing the extramembraneous catalytic core and F(0) containing the membrane proton channel, linked together by a central stalk and a peripheral stalk. During catalysis, ATP synthesis in the catalytic domain of F(1) is coupled via a rotary mechanism of the central stalk subunits to proton translocation. Its function is as follows. This protein is part of the stalk that links CF(0) to CF(1). It either transmits conformational changes from CF(0) to CF(1) or is implicated in proton conduction. In Campylobacter curvus (strain 525.92), this protein is ATP synthase subunit delta.